We begin with the raw amino-acid sequence, 238 residues long: Triosephosphate isomerase (238 aa).

7–9 (NFK) contributes to the substrate binding site. The active-site Electrophile is the histidine 91. Glutamate 158 functions as the Proton acceptor in the catalytic mechanism. Substrate contacts are provided by glycine 164 and serine 200.

Belongs to the triosephosphate isomerase family. As to quaternary structure, homodimer.

It localises to the cytoplasm. The enzyme catalyses D-glyceraldehyde 3-phosphate = dihydroxyacetone phosphate. It functions in the pathway carbohydrate biosynthesis; gluconeogenesis. Its pathway is carbohydrate degradation; glycolysis; D-glyceraldehyde 3-phosphate from glycerone phosphate: step 1/1. Its function is as follows. Involved in the gluconeogenesis. Catalyzes stereospecifically the conversion of dihydroxyacetone phosphate (DHAP) to D-glyceraldehyde-3-phosphate (G3P). The sequence is that of Triosephosphate isomerase from Ureaplasma parvum serovar 3 (strain ATCC 27815 / 27 / NCTC 11736).